The following is a 566-amino-acid chain: Peroxisomal leader peptide-processing protease (566 aa).

The serine protease stretch occupies residues A319–Q531. Residues H372, D408, and S481 each act as charge relay system in the active site.

The protein belongs to the peptidase S1B family. In terms of assembly, homodimer. Forms a heterodimer with the C-terminal cleavage product (45 kDa form). Forms a heterodimer with the N-terminal cleavage product (15 kDa form). Interacts with PEX5. Interacts with LONP2. In terms of processing, self-cleavage gives rise to an N-terminal 15-kDa fragment and C-terminal 45-kDa fragment upon import into the peroxisomes. The full-lengh TYSND1 is the active the proteolytic processing of PTS1- and PTS2-proteins and in self-cleavage, and intermolecular self-cleavage of TYSND1 down-regulates its protease activity.

Its subcellular location is the peroxisome. Peroxisomal protease that mediates both the removal of the leader peptide from proteins containing a PTS2 target sequence and processes several PTS1-containing proteins. Catalyzes the processing of PTS1-proteins involved in the peroxisomal beta-oxidation of fatty acids. The sequence is that of Peroxisomal leader peptide-processing protease (TYSND1) from Homo sapiens (Human).